Consider the following 271-residue polypeptide: Small ribosomal subunit protein uS2 (271 aa).

This sequence belongs to the universal ribosomal protein uS2 family.

The polypeptide is Small ribosomal subunit protein uS2 (Wolbachia pipientis subsp. Culex pipiens (strain wPip)).